Consider the following 1764-residue polypeptide: Latent-transforming growth factor beta-binding protein 2 (1764 aa).

Residues 1–35 (MRAPTTVRCSGRIQRARWRGFLPLVLALLMGTSHA) form the signal peptide. The segment at 80–140 (PGLSPSEWNQ…PPAARTAHSV (61 aa)) is disordered. Positions 94–115 (IPGRLAEAEARRPSRAQQLRRV) are heparin-binding. A compositionally biased stretch (polar residues) spans 108–128 (RAQQLRRVQSPVQTRRSNPRG). N-linked (GlcNAc...) asparagine glycosylation is present at N175. Residues 181 to 213 (IKPVCQPPCQNRGSCSRPQLCICRSGFRGARCE) form the EGF-like 1 domain. 3 disulfide bridges follow: C185–C195, C189–C201, and C203–C212. Residues 220 to 279 (EFDPQNARPVPRRSVEGAPGPHRSSEARGSLVTRIQPLLPPLPPPPSRTLSQTRPLQQHA) are disordered. Residues 226-243 (ARPVPRRSVEGAPGPHRS) form a heparin-binding region. Positions 257-266 (LLPPLPPPPS) are enriched in pro residues. N330 carries N-linked (GlcNAc...) asparagine glycosylation. 331 to 341 (LTEKIKKIKVV) is a binding site for heparin. The 33-residue stretch at 383–415 (RIYFCQIPCLNGGRCIGRDECWCPANSTGKFCH) folds into the EGF-like 2 domain. 3 disulfides stabilise this stretch: C387–C397, C391–C403, and C405–C414. N-linked (GlcNAc...) asparagine glycosylation occurs at N408. A disordered region spans residues 484-529 (EVDPVPEDNSVETRASHRPHGSSGHSHWASNSIPARAGEAPRPPPV). S493 carries the post-translational modification Phosphoserine. The region spanning 538-590 (GQCYLSTVNGQCANPLGELTSQEDCCGSVGTSWGVTSCAPCPPRPAFPVIENG) is the TB 1 domain. 3 disulfide bridges follow: C540–C562, C549–C575, and C563–C578. Residue N602 is glycosylated (N-linked (GlcNAc...) asparagine). The region spanning 608 to 648 (DINECLTLGLCKDSECVNTRGSYLCTCRPGLMLDPSRSRCV) is the EGF-like 3; calcium-binding domain. Cystine bridges form between C612–C623, C618–C632, C634–C647, C660–C682, C669–C695, C683–C698, and C684–C710. Positions 658–710 (GLCYRSMVSGTCTLPLVQRITKQICCCSRVGKAWGSKCEHCPLPGTEAFREIC) constitute a TB 2 domain. Disordered regions lie at residues 729 to 759 (KAEEEELASPVREQRQQSSGPPPGAAERQPL) and 786 to 809 (SAPHLPARVPGDATGRPTPSLPGQ). Residues 834–876 (GFDPCFAGASNICGPGTCVKLPNGYRCVCSPGYQLHPSQDYCT) form the EGF-like 4 domain. 45 cysteine pairs are disulfide-bonded: C838-C851, C846-C860, C862-C875, C881-C892, C886-C901, C903-C918, C924-C935, C930-C944, C946-C958, C964-C975, C970-C984, C987-C998, C1004-C1015, C1010-C1024, C1026-C1039, C1045-C1056, C1051-C1065, C1068-C1081, C1087-C1098, C1093-C1107, C1110-C1123, C1129-C1141, C1136-C1150, C1152-C1164, C1170-C1182, C1176-C1191, C1193-C1206, C1212-C1223, C1218-C1232, C1234-C1247, C1253-C1265, C1259-C1274, C1276-C1289, C1295-C1307, C1302-C1316, C1318-C1332, C1359-C1382, C1369-C1394, C1383-C1397, C1435-C1448, C1443-C1457, C1459-C1472, C1478-C1488, C1483-C1497, and C1499-C1512. In terms of domain architecture, EGF-like 5; calcium-binding spans 877–919 (DDNECLRNPCEGRGRCVNSVGSYSCLCYPGYTLATLGDTQECQ). An EGF-like 6; calcium-binding domain is found at 920-959 (DVDECEQPGVCSGGRCSNTEGSYHCECDQGYVMVRRGHCQ). The EGF-like 7; calcium-binding domain maps to 960 to 999 (DINECRHPGTCPDGRCVNSPGSYTCLACEEGYIGQSGNCV). The region spanning 1000–1040 (DMNECLTPGICAHGRCINMEGSFRCSCEPGYELTPDKKGCR) is the EGF-like 8; calcium-binding domain. The EGF-like 9; calcium-binding domain maps to 1041 to 1082 (DVDECASRASCPTGLCLNTEGSFTCSACQSGYWVNEDGTACE). The 42-residue stretch at 1083-1124 (DLDECAFPGVCPTGVCTNTVGSFSCKDCDRGFRPSPLGNSCE) folds into the EGF-like 10; calcium-binding domain. In terms of domain architecture, EGF-like 11; calcium-binding spans 1125–1165 (DVDECEGPQNSCLGGECKNTDGSYQCLCPQGFQLANGTVCE). The N-linked (GlcNAc...) asparagine glycan is linked to N1160. In terms of domain architecture, EGF-like 12; calcium-binding spans 1166–1207 (DVDECVGEEHCAPHGECLNSPGSFFCLCAPGFASAEGGTRCQ). One can recognise an EGF-like 13; calcium-binding domain in the interval 1208 to 1248 (DVDECATTEPCLGGHCVNTEGSFNCLCETGFQPAPDSGECV). The EGF-like 15; calcium-binding domain occupies 1249 to 1290 (DIDECANDTVCGNHGFCDNTDGSFRCLCDQGFETSPSGWECV). An N-linked (GlcNAc...) asparagine glycan is attached at N1255. Residues 1291-1333 (DVNECELMLAVCGDALCENVEGSFLCLCASDLEEYDAEEGHCR) form the EGF-like 16; calcium-binding domain. One can recognise a TB 3 domain in the interval 1357–1409 (MECYAEHNGGPPCSQILGQNSTQAECCSTQGARWGETCDPCPSEDSVEFSELC). A glycan (N-linked (GlcNAc...) asparagine) is linked at N1376. One can recognise an EGF-like 17; calcium-binding domain in the interval 1431 to 1473 (DADECILFGPALCQNGRCLNTVPGYICLCNPGYHYDAVSRKCQ). Positions 1474–1513 (DHNECQDLACENGECVNTEGSFHCFCSPPLILDLSGQRCV) constitute an EGF-like 18; calcium-binding domain. N1514 carries an N-linked (GlcNAc...) asparagine glycan. One can recognise a TB 4 domain in the interval 1530–1582 (DICWKKVTNDVCSQPLRGHHTTYTECCCQDGEAWSQQCALCPPRSSEVYAQLC). Intrachain disulfides connect C1532-C1555, C1541-C1567, C1556-C1570, C1557-C1582, C1680-C1691, C1686-C1700, C1702-C1715, C1721-C1736, C1731-C1745, and C1747-C1760. Residues 1585–1764 (ARIEAEREAG…PGPPHCAAKE (180 aa)) are C-terminal domain. In terms of domain architecture, EGF-like 19; calcium-binding spans 1676-1716 (QAEECGILNGCENGRCVRVREGYTCDCFEGFQLDTALMACV). Residues 1717-1761 (DVNECEDLNGAARLCAHGHCENTEGSYRCHCSPGYVAEPGPPHCA) form the EGF-like 20; calcium-binding domain.

This sequence belongs to the LTBP family. Forms part of the large latent transforming growth factor beta precursor complex; removal is essential for activation of complex. Interacts with SDC4. Interacts (via C-terminal domain) with FBN1 (via N-terminal domain) in a Ca(+2)-dependent manner. N-Glycosylated. In terms of processing, contains hydroxylated asparagine residues. As to expression, expressed in cortical astrocytes and glioma cells. Expression is up-regulated by TGFB1.

It localises to the secreted. It is found in the extracellular space. The protein localises to the extracellular matrix. May play an integral structural role in elastic-fiber architectural organization and/or assembly. In Rattus norvegicus (Rat), this protein is Latent-transforming growth factor beta-binding protein 2 (Ltbp2).